Here is a 133-residue protein sequence, read N- to C-terminus: ATP synthase epsilon chain, chloroplastic (133 aa).

It belongs to the ATPase epsilon chain family. In terms of assembly, F-type ATPases have 2 components, CF(1) - the catalytic core - and CF(0) - the membrane proton channel. CF(1) has five subunits: alpha(3), beta(3), gamma(1), delta(1), epsilon(1). CF(0) has three main subunits: a, b and c.

The protein localises to the plastid. Its subcellular location is the chloroplast thylakoid membrane. Its function is as follows. Produces ATP from ADP in the presence of a proton gradient across the membrane. The polypeptide is ATP synthase epsilon chain, chloroplastic (Nicotiana tomentosiformis (Tobacco)).